A 29-amino-acid polypeptide reads, in one-letter code: Ceratotoxin-B (29 aa).

As to quaternary structure, homomer of four to six subunits.

It is found in the secreted. Female-specific peptides with potent activity against Gram-positive and Gram-negative bacteria. They have as well hemolytic activity. The sequence is that of Ceratotoxin-B (CTXB) from Ceratitis capitata (Mediterranean fruit fly).